Consider the following 263-residue polypeptide: Small ribosomal subunit protein eS4 (263 aa).

In terms of domain architecture, S4 RNA-binding spans 42–104 (LPLIIFLRNR…TGEHFRLVYD (63 aa)).

This sequence belongs to the eukaryotic ribosomal protein eS4 family. Component of the small ribosomal subunit.

It is found in the cytoplasm. In terms of biological role, component of the small ribosomal subunit. The ribosome is a large ribonucleoprotein complex responsible for the synthesis of proteins in the cell. The polypeptide is Small ribosomal subunit protein eS4 (rps4) (Xenopus tropicalis (Western clawed frog)).